We begin with the raw amino-acid sequence, 374 residues long: Protein RecA (374 aa).

66 to 73 contributes to the ATP binding site; sequence GPESSGKT. The tract at residues 326–374 is disordered; the sequence is KLGVGVHPEESATEPGADAASAAPADAAPAVPAPTTAKATKSKATAAKS. Positions 338-374 are enriched in low complexity; it reads TEPGADAASAAPADAAPAVPAPTTAKATKSKATAAKS.

The protein belongs to the RecA family.

It localises to the cytoplasm. Functionally, can catalyze the hydrolysis of ATP in the presence of single-stranded DNA, the ATP-dependent uptake of single-stranded DNA by duplex DNA, and the ATP-dependent hybridization of homologous single-stranded DNAs. It interacts with LexA causing its activation and leading to its autocatalytic cleavage. The polypeptide is Protein RecA (Streptomyces coelicolor (strain ATCC BAA-471 / A3(2) / M145)).